The primary structure comprises 102 residues: Citrate lyase acyl carrier protein (102 aa).

S14 is subject to O-(phosphoribosyl dephospho-coenzyme A)serine.

It belongs to the CitD family. Oligomer with a subunit composition of (alpha,beta,gamma)6.

The protein localises to the cytoplasm. Its function is as follows. Covalent carrier of the coenzyme of citrate lyase. This is Citrate lyase acyl carrier protein from Streptococcus pyogenes serotype M4 (strain MGAS10750).